A 116-amino-acid polypeptide reads, in one-letter code: MDKKTSRLRRAIRARKKIQELGVNRLVVHRTPRHIYAQVINPEAQVVAAASTVEKAVKEQLKSTGNVDAAKAVGKFVAERAIEKGVTNVAFDRSGFKYHGRVAALADAAREAGLQF.

It belongs to the universal ribosomal protein uL18 family. As to quaternary structure, part of the 50S ribosomal subunit; part of the 5S rRNA/L5/L18/L25 subcomplex. Contacts the 5S and 23S rRNAs.

Functionally, this is one of the proteins that bind and probably mediate the attachment of the 5S RNA into the large ribosomal subunit, where it forms part of the central protuberance. The sequence is that of Large ribosomal subunit protein uL18 from Shewanella oneidensis (strain ATCC 700550 / JCM 31522 / CIP 106686 / LMG 19005 / NCIMB 14063 / MR-1).